We begin with the raw amino-acid sequence, 304 residues long: Cell surface-binding protein OPG105 (304 aa).

The Alpha-carbonic anhydrase domain occupies 1–235 (MPQQLSPINI…NDDTQVYYSG (235 aa)). The Virion surface segment spans residues 1–275 (MPQQLSPINI…YQKYIEGNKT (275 aa)). A helical transmembrane segment spans residues 276 to 294 (FAIIAIVFVFILTAILFFM). Topologically, residues 295 to 304 (SQRYSREKQN) are intravirion.

It belongs to the alpha-carbonic anhydrase family. As to quaternary structure, homodimer; disulfide-linked. Apparently non-glycosylated.

The protein localises to the virion membrane. Its function is as follows. Binds to chondroitin sulfate on the cell surface to provide virion attachment to target cell. The protein is Cell surface-binding protein OPG105 (OPG105) of Vaccinia virus (strain Ankara) (VACV).